We begin with the raw amino-acid sequence, 123 residues long: Potassium voltage-gated channel subfamily E member 2 (123 aa).

Residues Asn6 and Asn29 are each glycosylated (N-linked (GlcNAc...) asparagine). A helical transmembrane segment spans residues 49–69 (VILYLMVMIGMFAFIVVAILV). At 70 to 123 (STVKSKRREHSQDPYHQYIVEDWQQKYRSQILHLEDSKATIHENLGATGFTVSP) the chain is on the cytoplasmic side.

This sequence belongs to the potassium channel KCNE family. As to quaternary structure, interacts with KCNB1. Associates with KCNH2/ERG1. May associate with KCNQ2 and KCNQ3. Associates with HCN1 and probably HCN2. Heteromultimer with KCNC2. Interacts with KCNC2. Interacts with KCNQ1; forms a heterooligomer complex that targets to the membrane raft and leading to currents with an apparently instantaneous activation, a rapid deactivation process and a linear current-voltage relationship and decreases the amplitude of the outward current.

It localises to the cell membrane. Its subcellular location is the apical cell membrane. Ancillary protein that functions as a regulatory subunit of the voltage-gated potassium (Kv) channel complex composed of pore-forming and potassium-conducting alpha subunits and of regulatory beta subunits. KCNE2 beta subunit modulates the gating kinetics and enhances stability of the channel complex. Alters the gating of the delayed rectifier Kv channel containing KCNB1 alpha subunit. Associates with KCNH2/HERG alpha subunit Kv channel to form the rapidly activating component of the delayed rectifying potassium current (IKr) in heart. May associate with KCNQ2 and/or KCNQ3 alpha subunits to modulate the native M-type current. May associate with HCN1 and HCN2 channel subunits to increase potassium current. Forms a heterooligomer complex with KCNQ1/KVLQT1 alpha subunits which leads to currents with an apparently instantaneous activation, a rapid deactivation process and a linear current-voltage relationship and decreases the amplitude of the outward current. KCNQ1-KCNE2 channel associates with Na(+)-coupled myo-inositol symporter in the apical membrane of choroid plexus epithelium and regulates the myo-inositol gradient between blood and cerebrospinal fluid with an impact on neuron excitability. The sequence is that of Potassium voltage-gated channel subfamily E member 2 (Kcne2) from Cavia porcellus (Guinea pig).